The sequence spans 226 residues: Cytidylate kinase (226 aa).

12 to 20 lines the ATP pocket; that stretch reads GPSGAGKGT.

Belongs to the cytidylate kinase family. Type 1 subfamily.

It localises to the cytoplasm. It catalyses the reaction CMP + ATP = CDP + ADP. The catalysed reaction is dCMP + ATP = dCDP + ADP. The protein is Cytidylate kinase of Vibrio vulnificus (strain CMCP6).